Reading from the N-terminus, the 196-residue chain is C-type lectin domain family 3 member A (196 aa).

The first 22 residues, 1 to 22 (MAKNGLVLCILVVSLLLDQTDG), serve as a signal peptide directing secretion. Cystine bridges form between Cys68–Cys78, Cys95–Cys191, and Cys167–Cys183. One can recognise a C-type lectin domain in the interval 74-192 (VHKKCYLASE…CRSSKRYICE (119 aa)).

The protein resides in the secreted. Promotes cell adhesion to laminin and fibronectin. This Mus musculus (Mouse) protein is C-type lectin domain family 3 member A (Clec3a).